The sequence spans 242 residues: Small ribosomal subunit protein uS2 (242 aa).

This sequence belongs to the universal ribosomal protein uS2 family.

The chain is Small ribosomal subunit protein uS2 from Shewanella frigidimarina (strain NCIMB 400).